Consider the following 282-residue polypeptide: Nucleotide-binding protein in ptsN-ptsO intergenic region (282 aa).

8 to 15 (GRSGSGKS) is a binding site for ATP. GTP is bound at residue 56 to 59 (DVRN).

This sequence belongs to the RapZ-like family.

Its function is as follows. Displays ATPase and GTPase activities. This is Nucleotide-binding protein in ptsN-ptsO intergenic region from Shewanella violacea.